The chain runs to 76 residues: Conotoxin Am6.3 (76 aa).

The first 22 residues, Met1–Ala22, serve as a signal peptide directing secretion. Cystine bridges form between Cys52/Cys67, Cys59/Cys71, and Cys66/Cys75.

This sequence belongs to the conotoxin O1 superfamily. Is not hydroxylated. As to expression, expressed by the venom duct.

It localises to the secreted. Its function is as follows. Probable toxin that inhibits ion channels. In Conus amadis (Amadis cone), this protein is Conotoxin Am6.3.